The chain runs to 200 residues: Imidazoleglycerol-phosphate dehydratase (200 aa).

The protein belongs to the imidazoleglycerol-phosphate dehydratase family.

It localises to the cytoplasm. It carries out the reaction D-erythro-1-(imidazol-4-yl)glycerol 3-phosphate = 3-(imidazol-4-yl)-2-oxopropyl phosphate + H2O. It participates in amino-acid biosynthesis; L-histidine biosynthesis; L-histidine from 5-phospho-alpha-D-ribose 1-diphosphate: step 6/9. This Renibacterium salmoninarum (strain ATCC 33209 / DSM 20767 / JCM 11484 / NBRC 15589 / NCIMB 2235) protein is Imidazoleglycerol-phosphate dehydratase.